We begin with the raw amino-acid sequence, 498 residues long: ATP synthase subunit beta, chloroplastic (498 aa).

At Thr-6 the chain carries Phosphothreonine. Ser-13 is subject to Phosphoserine. 172–179 is a binding site for ATP; sequence GGAGVGKT.

The protein belongs to the ATPase alpha/beta chains family. As to quaternary structure, F-type ATPases have 2 components, CF(1) - the catalytic core - and CF(0) - the membrane proton channel. CF(1) has five subunits: alpha(3), beta(3), gamma(1), delta(1), epsilon(1). CF(0) has four main subunits: a(1), b(1), b'(1) and c(9-12).

It localises to the plastid. The protein localises to the chloroplast thylakoid membrane. It catalyses the reaction ATP + H2O + 4 H(+)(in) = ADP + phosphate + 5 H(+)(out). In terms of biological role, produces ATP from ADP in the presence of a proton gradient across the membrane. The catalytic sites are hosted primarily by the beta subunits. The polypeptide is ATP synthase subunit beta, chloroplastic (Crucihimalaya wallichii (Rock-cress)).